The sequence spans 455 residues: Beta-1,4-mannosyltransferase bre-3 (455 aa).

It belongs to the glycosyltransferase 2 family.

The protein localises to the cytoplasm. The protein operates within protein modification; protein glycosylation. Glycosyltransferase with a proposed role in glycosphingolipid biosynthesis. Involved in susceptibility to pore-forming crystal toxins in conjunction with bre-1, bre-2 and bre-4. Involved in resistance to the nematotoxic C.cinerea galectin Cgl2. Has a role in determining brood size. The sequence is that of Beta-1,4-mannosyltransferase bre-3 from Caenorhabditis briggsae.